A 751-amino-acid chain; its full sequence is uncharacterized protein (751 aa).

The segment at 73–169 is disordered; it reads FGVVHSHTPK…PVLIDDDTGE (97 aa). A compositionally biased stretch (low complexity) spans 96–109; sequence ATSTRRSATAQRAA. A compositionally biased stretch (polar residues) spans 111 to 120; sequence LKSSPVDQWS.

This is an uncharacterized protein from Invertebrate iridescent virus 3 (IIV-3).